A 423-amino-acid polypeptide reads, in one-letter code: MTIPAPIPDKAESSLSFTQGLLLGQLSIVILIGAFIKFFIFGDPPSPDVTAALRATERRSRTLAHKRSLLTLRSSTPRRASQPLNRKRSSVLRNPAPLTTNAILSKTYYNVDSHQPESLDWFNVLIAQTIAQFRADAQHDDAILTSLTKVLNGGNRPDFLDEIKVTELSLGEDFPIFSNCRVIPVDEDGMTLGREGGAAGREHGRLQARMDVDLSDFITLAVETKLLLNYPKPLVAVLPVALAVSVVRFSGTLSISFVPGSPLNGSPTTLAFCFLDDYRLDLSIRSLVGSRSRLQDVPKIAQLIEARLHTWFDERCVEPRFQQIELPSLWPRKKNTRGGEDLDTGSDAGGIGRARSRDVERDLREEARKEVEAETGIRVGRSKLGVSLDVPDEGSEDGLRFRRKSKGRDEYAMPGSMPGLSMT.

Topologically, residues 1-20 are lumenal; that stretch reads MTIPAPIPDKAESSLSFTQG. A helical membrane pass occupies residues 21 to 41; it reads LLLGQLSIVILIGAFIKFFIF. Residues 42–423 lie on the Cytoplasmic side of the membrane; the sequence is GDPPSPDVTA…PGSMPGLSMT (382 aa). Residues 115 to 327 enclose the SMP-LTD domain; that stretch reads QPESLDWFNV…EPRFQQIELP (213 aa). Disordered regions lie at residues 332-372 and 387-423; these read RKKN…KEVE and SLDVPDEGSEDGLRFRRKSKGRDEYAMPGSMPGLSMT. A compositionally biased stretch (basic and acidic residues) spans 355 to 372; the sequence is RSRDVERDLREEARKEVE.

This sequence belongs to the MMM1 family. As to quaternary structure, homodimer. Component of the ER-mitochondria encounter structure (ERMES) or MDM complex, composed of MMM1, MDM10, MDM12 and MDM34. An MMM1 homodimer associates with one molecule of MDM12 on each side in a pairwise head-to-tail manner, and the SMP-LTD domains of MMM1 and MDM12 generate a continuous hydrophobic tunnel for phospholipid trafficking.

The protein resides in the endoplasmic reticulum membrane. Functionally, component of the ERMES/MDM complex, which serves as a molecular tether to connect the endoplasmic reticulum (ER) and mitochondria. Components of this complex are involved in the control of mitochondrial shape and protein biogenesis, and function in nonvesicular lipid trafficking between the ER and mitochondria. The MDM12-MMM1 subcomplex functions in the major beta-barrel assembly pathway that is responsible for biogenesis of all outer membrane beta-barrel proteins, and acts in a late step after the SAM complex. The MDM10-MDM12-MMM1 subcomplex further acts in the TOM40-specific pathway after the action of the MDM12-MMM1 complex. Essential for establishing and maintaining the structure of mitochondria and maintenance of mtDNA nucleoids. This is Maintenance of mitochondrial morphology protein 1 from Botryotinia fuckeliana (strain B05.10) (Noble rot fungus).